A 949-amino-acid chain; its full sequence is L-fucokinase/L-fucose-1-P guanylyltransferase (949 aa).

A fucose-1-phosphate guanylyltransferase region spans residues 25 to 191 (DWFCTSDPVG…DFMLQKPSLA (167 aa)). The tract at residues 559 to 949 (LLRDGLLDGI…SDKGFQVSRS (391 aa)) is L-fucokinase.

This sequence belongs to the GHMP kinase family. Homotetramer. Mn(2+) serves as cofactor. The cofactor is Mg(2+).

It carries out the reaction L-fucose + ATP = beta-L-fucose 1-phosphate + ADP + H(+). The enzyme catalyses beta-L-fucose 1-phosphate + GTP + H(+) = GDP-beta-L-fucose + diphosphate. In terms of biological role, bifunctional enzyme involved in the salvage pathway of GDP-fucose synthesis. Catalyzes two successive reactions, the ATP-dependent phosphorylation of L-fucose to L-fucose 1-phosphate, and its guanylylation to GDP-L-fucose. GDP-fucose is an important fucose donor in the process of fucosylated oligosaccharides formation. This chain is L-fucokinase/L-fucose-1-P guanylyltransferase, found in Bacteroides fragilis.